The following is a 372-amino-acid chain: Neuropeptide S receptor (372 aa).

Over 1–52 the chain is Extracellular; that stretch reads MPANLTEGSFHANQTVPMLDSSPVACTEIVTFTEALEAEEWGSFYSSFKTEQ. N-linked (GlcNAc...) asparagine glycosylation is found at asparagine 4 and asparagine 13. A helical membrane pass occupies residues 53–73; that stretch reads LITLWVLFVFTIVGNSVVLFS. Over 74–82 the chain is Cytoplasmic; that stretch reads TWRRKRKSR. Residues 83-103 form a helical membrane-spanning segment; that stretch reads MTFFVTQLAITDSFTGLINIL. The Extracellular segment spans residues 104–122; it reads TDIIWRFTGDFMAPDLVCR. The cysteines at positions 121 and 198 are disulfide-linked. The helical transmembrane segment at 123–143 threads the bilayer; the sequence is IVRYLQVVLLYASTYVLVSLS. The Cytoplasmic portion of the chain corresponds to 144-165; it reads IDRYHAIVYPMKFLQGAEKQAK. A helical membrane pass occupies residues 166 to 186; it reads VLIGIAWSLSFLFSIPTLIIF. Topologically, residues 187 to 213 are extracellular; it reads GKRTLSNGEVQCWALWPDDSYWTPYMT. The chain crosses the membrane as a helical span at residues 214 to 234; that stretch reads IVAFLVYFIPLTIISVIYGLV. Topologically, residues 235 to 276 are cytoplasmic; it reads IRTIWIKSKAHETVISNCSDGELCCSYNRGLISKAKIKAIKY. Residues 277–297 traverse the membrane as a helical segment; that stretch reads SIVIILAFICCWSPYFLFDML. At 298–313 the chain is on the extracellular side; the sequence is DNFNLLPDTKERFYAS. A helical transmembrane segment spans residues 314–334; it reads VIIQNLPALNSAINPLIYCIF. At 335 to 372 the chain is on the cytoplasmic side; sequence SGSLCSPCKVQRSQDSRMTYRERSERHEMQILSKPEFI.

It belongs to the G-protein coupled receptor 1 family. Vasopressin/oxytocin receptor subfamily.

The protein localises to the cell membrane. G-protein coupled receptor for neuropeptide S (NPS). Promotes mobilization of intracellular Ca(2+) stores. Inhibits cell growth in response to NPS binding. Involved in pathogenesis of asthma and other IgE-mediated diseases. The sequence is that of Neuropeptide S receptor (Npsr1) from Rattus norvegicus (Rat).